The sequence spans 512 residues: ATP synthase subunit alpha (512 aa).

Residue 169-176 coordinates ATP; it reads GDRQTGKT.

Belongs to the ATPase alpha/beta chains family. As to quaternary structure, F-type ATPases have 2 components, CF(1) - the catalytic core - and CF(0) - the membrane proton channel. CF(1) has five subunits: alpha(3), beta(3), gamma(1), delta(1), epsilon(1). CF(0) has three main subunits: a(1), b(2) and c(9-12). The alpha and beta chains form an alternating ring which encloses part of the gamma chain. CF(1) is attached to CF(0) by a central stalk formed by the gamma and epsilon chains, while a peripheral stalk is formed by the delta and b chains.

The protein localises to the cell membrane. The enzyme catalyses ATP + H2O + 4 H(+)(in) = ADP + phosphate + 5 H(+)(out). In terms of biological role, produces ATP from ADP in the presence of a proton gradient across the membrane. The alpha chain is a regulatory subunit. This chain is ATP synthase subunit alpha, found in Buchnera aphidicola subsp. Acyrthosiphon pisum (strain Tuc7).